Reading from the N-terminus, the 499-residue chain is Putative protein phosphatase 2C 76 (499 aa).

Residues 1-34 (MRLGCSGRRRRLLRAALLRLVVLVLVAPPRRCAG) form the signal peptide. A disordered region spans residues 67–101 (AGSGGEGDGDRRSSSSSPPPPPHPRGCHVAVDRGR). A PPM-type phosphatase domain is found at 92–457 (GCHVAVDRGR…DNVAAVIVPL (366 aa)). Asp-138 and Gly-139 together coordinate Mn(2+). A disordered region spans residues 286-306 (KKTSVVSGKRRRKRNSNNRDD). Mn(2+)-binding residues include Asp-397 and Asp-448.

This sequence belongs to the PP2C family. The cofactor is Mg(2+). Mn(2+) is required as a cofactor.

It catalyses the reaction O-phospho-L-seryl-[protein] + H2O = L-seryl-[protein] + phosphate. It carries out the reaction O-phospho-L-threonyl-[protein] + H2O = L-threonyl-[protein] + phosphate. This Oryza sativa subsp. japonica (Rice) protein is Putative protein phosphatase 2C 76.